A 325-amino-acid chain; its full sequence is Neural proliferation differentiation and control protein 1 (325 aa).

The first 34 residues, 1 to 34, serve as a signal peptide directing secretion; that stretch reads MATPLPPPSPRHLRLLRLLLSGLVLGAALRGAAA. A disordered region spans residues 138-175; that stretch reads QGLELGLPSTPGTPTPTPHTSLGSPVSSDPVHMSPLEP. A helical transmembrane segment spans residues 182–202; it reads GLALVLILAFCVAGAAALSVA. Position 229 is a phosphoserine (Ser-229). Residues 266 to 290 are disordered; it reads EPPKELDTASSDEENEDGDFTVYEC. Acidic residues predominate over residues 275–284; that stretch reads SSDEENEDGD.

This sequence belongs to the NPDC1/cab-1 family. Strongly expressed in adult brain; especially in hippocampus, frontal lobe and temporal lobe.

Its subcellular location is the membrane. In terms of biological role, suppresses oncogenic transformation in neural and non-neural cells and down-regulates neural cell proliferation. Might be involved in transcriptional regulation. This is Neural proliferation differentiation and control protein 1 (NPDC1) from Homo sapiens (Human).